Here is a 281-residue protein sequence, read N- to C-terminus: Pantothenate synthetase (281 aa).

Position 30–37 (30–37 (MGYLHDGH)) interacts with ATP. Catalysis depends on H37, which acts as the Proton donor. Residue Q61 participates in (R)-pantoate binding. Residue Q61 coordinates beta-alanine. An ATP-binding site is contributed by 147-150 (GEKD). Q153 serves as a coordination point for (R)-pantoate. ATP is bound by residues I176 and 184-187 (KSSR).

It belongs to the pantothenate synthetase family. As to quaternary structure, homodimer.

It is found in the cytoplasm. It carries out the reaction (R)-pantoate + beta-alanine + ATP = (R)-pantothenate + AMP + diphosphate + H(+). It participates in cofactor biosynthesis; (R)-pantothenate biosynthesis; (R)-pantothenate from (R)-pantoate and beta-alanine: step 1/1. Functionally, catalyzes the condensation of pantoate with beta-alanine in an ATP-dependent reaction via a pantoyl-adenylate intermediate. This chain is Pantothenate synthetase, found in Clostridium acetobutylicum (strain ATCC 824 / DSM 792 / JCM 1419 / IAM 19013 / LMG 5710 / NBRC 13948 / NRRL B-527 / VKM B-1787 / 2291 / W).